The following is a 2415-amino-acid chain: Spectrin alpha chain (2415 aa).

Spectrin repeat units lie at residues 48-150, 154-254, 258-362, 366-464, 471-574, 577-679, 683-784, 788-890, and 894-963; these read RFQY…KLQQ, LVQF…QEKL, HEIQ…KLDE, LHRF…DRRI, DLQL…LLED, RYQQ…KLNE, QQQF…QHLL, QVQQ…QDLD, and QAHQ…RQQE. Positions 970 to 1029 constitute an SH3 domain; the sequence is TGKECVVALYDYTEKSPREVSMKKGDVLTLLNSNNKDWWKVEVNDRQGFVPAAYIKKIDA. Ser1032 and Ser1034 each carry phosphoserine. 11 Spectrin repeats span residues 1079-1177, 1181-1284, 1287-1391, 1394-1496, 1500-1604, 1608-1710, 1714-1816, 1820-1921, 1926-2028, 2040-2141, and 2154-2252; these read VREA…ASQL, HEVQ…EKLL, YDLQ…QLEQ, DLQL…SRLG, TLQQ…KLKE, QRTY…RLNE, LHQF…KLDE, YQQF…GALL, YLQF…DRLL, LYLT…DGEL, and LRKE…NLEQ. 2 consecutive EF-hand domains span residues 2265–2300 and 2308–2343; these read DSLK…LGYD and QPDP…KETE. Ca(2+) is bound by residues Asp2278, Asp2280, Ser2282, Lys2284, Glu2289, Asp2321, Asn2323, Asp2325, Tyr2327, and Glu2332.

The protein belongs to the spectrin family. As to quaternary structure, native spectrin molecule is a tetramer composed of two antiparallel heterodimers joined head to head so that each end of the native molecule includes the C-terminus of the alpha subunit and the N-terminus of the beta subunit. Interacts with calmodulin in a calcium-dependent manner, interacts with F-actin and also interacts with Lva. Interacts with Ten-m. In terms of tissue distribution, a substantial pool of maternal protein in the egg undergoes dynamic changes in distribution early in embryogenesis. In gastrulated embryo, the highest level of protein is found in the respiratory tract cells and the lowest in parts of the forming gut.

Its subcellular location is the cytoplasm. The protein localises to the cytoskeleton. It is found in the golgi apparatus. It localises to the cell projection. The protein resides in the cilium. Its subcellular location is the flagellum. Functionally, spectrin is the major constituent of the cytoskeletal network underlying the erythrocyte plasma membrane. It associates with band 4.1 and actin to form the cytoskeletal superstructure of the erythrocyte plasma membrane. Essential for larval survival and development. Stabilizes cell to cell interactions that are critical for the maintenance of cell shape and subcellular organization within embryonic tissues. Lva and spectrin may form a Golgi-based scaffold that mediates interaction of Golgi bodies with microtubules and facilitates Golgi-derived membrane secretion required for the formation of furrows during cellularization. In Drosophila melanogaster (Fruit fly), this protein is Spectrin alpha chain (alpha-Spec).